The sequence spans 230 residues: MALYDRANSRNAYAEDSLLRESELVSFVKTTYKFFAGSLLLATIGALLGLMNFQAVVQYKWVFFIAEIAAFFGLMFSKSKPGLNLFMLFAFTSLSGVTLVPLLGMVIAKAGLGAIWQALGMTTIVFGLMSVYALKTKNDLANMGKMLFIALIVVVVCSLINLFLGSPMFQVVIAGASAILFSLYIAYDTQNIVKGMYDSPIDAAVSLYLDFLNVFISILQIIGIFSDRDT.

The next 7 membrane-spanning stretches (helical) occupy residues 34–54 (FFAG…MNFQ), 56–76 (VVQY…GLMF), 87–107 (MLFA…GMVI), 111–131 (GLGA…LMSV), 146–166 (MLFI…FLGS), 167–187 (PMFQ…YIAY), and 205–225 (VSLY…IGIF).

Belongs to the BI1 family.

It is found in the cell membrane. This is an uncharacterized protein from Helicobacter pylori (strain ATCC 700392 / 26695) (Campylobacter pylori).